We begin with the raw amino-acid sequence, 75 residues long: Putative defensin-like protein 119 (75 aa).

The first 25 residues, 1-25, serve as a signal peptide directing secretion; sequence MAKSTIFAIFMIVFVLGMVTKETKG. Cystine bridges form between Cys29–Cys73, Cys39–Cys58, Cys44–Cys67, and Cys48–Cys69.

Belongs to the DEFL family.

Its subcellular location is the secreted. The protein is Putative defensin-like protein 119 (LCR53) of Arabidopsis thaliana (Mouse-ear cress).